A 681-amino-acid polypeptide reads, in one-letter code: Pumilio domain-containing protein C6G9.14 (681 aa).

Disordered regions lie at residues 180–210 (RPGLSSYTPGPSTSRRSISSSSNLGGNPGLI) and 273–322 (ASTA…NVPS). Composition is skewed to low complexity over residues 187 to 210 (TPGPSTSRRSISSSSNLGGNPGLI) and 273 to 286 (ASTASTGSTDSSGS). The PUM-HD domain maps to 319-659 (NVPSLISDDP…RILSKLERRH (341 aa)). Pumilio repeat units follow at residues 342 to 378 (SLQNSNILSFCKDQHGCRYLQRLLEKKNQSHIDAVFA), 379 to 414 (ETHPYLAVLMVDAFGNYLCQKLFEHASEAQRSTFIQ), 415 to 451 (IIAPKLVPISFNMHGTRALQKIIDLVSSPDQISCIVN), 452 to 487 (ALRPNVVLLTKDLNGNHVIQKCLNKFSQEDCQFIFD), 488 to 523 (AICEDPLDVSTHRHGCCVVQRCFDHASPAQIEQLVE), 524 to 559 (HIVPHALTLVQDAFGNYVLQYVLELNNPNHTEAIIS), 560 to 595 (YFLYKVRALSTQKFSSNVMEKCIFFAPAAIKEKLIS), and 596 to 633 (ELMDEKHLPKLLRDSFANYVIQTALDNASVKQRAELVE). The segment covering 656–666 (ERRHPSSKEKP) has biased composition (basic and acidic residues). The interval 656–681 (ERRHPSSKEKPIVYSNSERVNTSSSA) is disordered. Over residues 669–681 (YSNSERVNTSSSA) the composition is skewed to polar residues.

The chain is Pumilio domain-containing protein C6G9.14 from Schizosaccharomyces pombe (strain 972 / ATCC 24843) (Fission yeast).